Reading from the N-terminus, the 213-residue chain is 3-isopropylmalate dehydratase small subunit (213 aa).

The protein belongs to the LeuD family. LeuD type 1 subfamily. In terms of assembly, heterodimer of LeuC and LeuD.

It carries out the reaction (2R,3S)-3-isopropylmalate = (2S)-2-isopropylmalate. It functions in the pathway amino-acid biosynthesis; L-leucine biosynthesis; L-leucine from 3-methyl-2-oxobutanoate: step 2/4. In terms of biological role, catalyzes the isomerization between 2-isopropylmalate and 3-isopropylmalate, via the formation of 2-isopropylmaleate. This Neisseria meningitidis serogroup A / serotype 4A (strain DSM 15465 / Z2491) protein is 3-isopropylmalate dehydratase small subunit.